We begin with the raw amino-acid sequence, 329 residues long: Beta-ketoacyl-[acyl-carrier-protein] synthase III (329 aa).

Catalysis depends on residues C112 and H253. Residues 254–258 are ACP-binding; the sequence is QANQR. The active site involves N283.

It belongs to the thiolase-like superfamily. FabH family. In terms of assembly, homodimer.

It is found in the cytoplasm. It carries out the reaction malonyl-[ACP] + acetyl-CoA + H(+) = 3-oxobutanoyl-[ACP] + CO2 + CoA. It functions in the pathway lipid metabolism; fatty acid biosynthesis. Its function is as follows. Catalyzes the condensation reaction of fatty acid synthesis by the addition to an acyl acceptor of two carbons from malonyl-ACP. Catalyzes the first condensation reaction which initiates fatty acid synthesis and may therefore play a role in governing the total rate of fatty acid production. Possesses both acetoacetyl-ACP synthase and acetyl transacylase activities. Its substrate specificity determines the biosynthesis of branched-chain and/or straight-chain of fatty acids. The sequence is that of Beta-ketoacyl-[acyl-carrier-protein] synthase III from Gloeobacter violaceus (strain ATCC 29082 / PCC 7421).